The following is a 312-amino-acid chain: Bifunctional pinoresinol-lariciresinol reductase 1 (312 aa).

Residues 10 to 16 (GGTGYIG), arginine 35, and lysine 44 each bind NADP(+). Lysine 136 acts as the Proton acceptor in catalysis. Arginine 140 serves as a coordination point for NADP(+). Histidine 268 lines the substrate pocket.

It belongs to the NmrA-type oxidoreductase family. Isoflavone reductase subfamily. As to quaternary structure, dimer. In terms of tissue distribution, expressed in seeds and roots, but not in stems. Detected in leaves.

It catalyses the reaction (-)-lariciresinol + NADP(+) = (-)-pinoresinol + NADPH + H(+). The catalysed reaction is (+)-secoisolariciresinol + NADP(+) = (-)-lariciresinol + NADPH + H(+). Functionally, reductase involved in lignan biosynthesis. Catalyzes the enantioselective conversion of (-)-pinoresinol into (-)-lariciresinol and of (-)-lariciresinol into (+)-secoisolariciresinol. Abstracts the 4R-hydride from the NADPH cofactor during catalysis. This Linum usitatissimum (Flax) protein is Bifunctional pinoresinol-lariciresinol reductase 1 (PLR_Lu1).